A 624-amino-acid polypeptide reads, in one-letter code: Membrane protein insertase YidC (624 aa).

The helical transmembrane segment at 8–28 threads the bilayer; it reads MIIAIALSLAVLLGWNYFVTA. A disordered region spans residues 36–95; sequence QQQAAQVNPSQGVNPSQGVDPSQGVNASPSPKEGGPSAPVPGTLPGAAGGSPQAALARDE. Residues 43–64 are compositionally biased toward polar residues; sequence NPSQGVNPSQGVDPSQGVNASP. The next 5 helical transmembrane spans lie at 370-390, 396-416, 470-490, 526-542, and 559-579; these read FDLL…FKAL, LFGN…LFFL, WPVL…FVTI, LLHL…TMFL, and FTFM…GLVI.

This sequence belongs to the OXA1/ALB3/YidC family. Type 1 subfamily. In terms of assembly, interacts with the Sec translocase complex via SecD. Specifically interacts with transmembrane segments of nascent integral membrane proteins during membrane integration.

The protein localises to the cell inner membrane. Its function is as follows. Required for the insertion and/or proper folding and/or complex formation of integral membrane proteins into the membrane. Involved in integration of membrane proteins that insert both dependently and independently of the Sec translocase complex, as well as at least some lipoproteins. Aids folding of multispanning membrane proteins. This chain is Membrane protein insertase YidC, found in Methylobacterium sp. (strain 4-46).